Reading from the N-terminus, the 649-residue chain is Quinol oxidase subunit 1 (649 aa).

Topologically, residues 1–15 are extracellular; it reads MKFKWDEFFVTGDPL. The chain crosses the membrane as a helical span at residues 16 to 34; that stretch reads ILGAQVSIALSTIAIIFVL. Over 35–56 the chain is Cytoplasmic; that stretch reads TYFKKWKWLWSEWITTVDHKKL. Residues 57 to 75 form a helical membrane-spanning segment; sequence GIMYIISAVIMLFRGGVDG. Residues 76 to 97 are Extracellular-facing; the sequence is LMMRAQLALPNNSFLDSNHYNE. Residues 98–117 traverse the membrane as a helical segment; that stretch reads IFTTHGTIMIIFMAMPFLIG. His102 lines the Fe(II)-heme a pocket. The Cytoplasmic segment spans residues 118–139; it reads LINVVVPLQIGARDVAFPYLNN. A helical membrane pass occupies residues 140 to 157; that stretch reads LSFWTFFVGAMLFNISFV. The Extracellular segment spans residues 158–190; sequence IGGSPNAGWTSYMPLASNDMSPGPGENYYLLGL. A helical transmembrane segment spans residues 191–209; that stretch reads QIAGIGTLMTGINFMVTIL. The Cytoplasmic portion of the chain corresponds to 210–227; it reads KMRTKGMTLMRMPMFTWT. A helical transmembrane segment spans residues 228–246; sequence TLITMVIIVFAFPVLTVAL. At 247-272 the chain is on the extracellular side; it reads ALLSFDRLFGAHFFTLEAGGMPMLWA. Residues 273-292 traverse the membrane as a helical segment; it reads NLFWIWGHPEVYIVILPAFG. Cu cation-binding residues include His280 and Tyr284. The 1'-histidyl-3'-tyrosine (His-Tyr) cross-link spans 280–284; that stretch reads HPEVY. The Cytoplasmic portion of the chain corresponds to 293–315; sequence IFSEIISSFARKQLFGYKAMVGS. Residues 316-335 traverse the membrane as a helical segment; that stretch reads IIAISVLSFLVWTHHFFTMG. Cu cation is bound by residues His329 and His330. At 336–343 the chain is on the extracellular side; the sequence is NSASVNSF. Residues 344–362 traverse the membrane as a helical segment; that stretch reads FSITTMAISIPTGVKIFNW. The Cytoplasmic segment spans residues 363–377; it reads LFTMYKGRISFTTPM. Residues 378 to 397 traverse the membrane as a helical segment; sequence LWALAFIPNFVIGGVTGVML. Topologically, residues 398–405 are extracellular; it reads AMAAADYQ. Residues 406–425 traverse the membrane as a helical segment; it reads YHNTYFLVSHFHYVLIAGTV. Heme a3 is bound at residue His415. His417 contacts Fe(II)-heme a. Residues 426 to 452 lie on the Cytoplasmic side of the membrane; the sequence is FACFAGFIFWYPKMFGHKLNERIGKWF. The helical transmembrane segment at 453-472 threads the bilayer; it reads FWIFMIGFNICFFPQYFLGL. At 473 to 490 the chain is on the extracellular side; it reads QGMPRRIYTYGPNDGWTT. Residues 491–510 form a helical membrane-spanning segment; the sequence is LNFISTVGAFMMGVGFLILC. Topologically, residues 511-584 are cytoplasmic; it reads YNIYYSFRYS…SKFKKIHMPS (74 aa). Residues 585 to 604 form a helical membrane-spanning segment; it reads NSGRPFFMSVAFGLAGFGLV. The Extracellular portion of the chain corresponds to 605–610; it reads FEWYWM. A helical membrane pass occupies residues 611 to 631; that stretch reads GVVGLIGVLLCMVLRSFEYDN. Residues 632–649 are Cytoplasmic-facing; the sequence is GYYISVDEIKETERKISE.

Belongs to the heme-copper respiratory oxidase family. Cu cation serves as cofactor. Requires ferriheme a as cofactor. Heme A3. is required as a cofactor.

Its subcellular location is the cell membrane. The catalysed reaction is 2 a quinol + O2 = 2 a quinone + 2 H2O. The protein operates within energy metabolism; oxidative phosphorylation. Its function is as follows. Catalyzes quinol oxidation with the concomitant reduction of oxygen to water. Major component for energy conversion during vegetative growth. The polypeptide is Quinol oxidase subunit 1 (qoxB) (Bacillus subtilis (strain 168)).